The following is a 505-amino-acid chain: Glutamate--tRNA ligase (505 aa).

Residues 11–21 (PSPTGPLHIGG) carry the 'HIGH' region motif. The short motif at 260-264 (KLSKR) is the 'KMSKS' region element. Lys-263 lines the ATP pocket.

The protein belongs to the class-I aminoacyl-tRNA synthetase family. Glutamate--tRNA ligase type 1 subfamily. Monomer.

It localises to the cytoplasm. It catalyses the reaction tRNA(Glu) + L-glutamate + ATP = L-glutamyl-tRNA(Glu) + AMP + diphosphate. Functionally, catalyzes the attachment of glutamate to tRNA(Glu) in a two-step reaction: glutamate is first activated by ATP to form Glu-AMP and then transferred to the acceptor end of tRNA(Glu). The protein is Glutamate--tRNA ligase of Christiangramia forsetii (strain DSM 17595 / CGMCC 1.15422 / KT0803) (Gramella forsetii).